We begin with the raw amino-acid sequence, 487 residues long: WAS/WASL-interacting protein family member 1 (487 aa).

Positions 1 to 14 (MPVPPPPAPPPPPT) are enriched in pro residues. The interval 1 to 487 (MPVPPPPAPP…GAPPLPPIPR (487 aa)) is disordered. The segment covering 21–31 (EKPSLNKTEQA) has biased composition (polar residues). The WH2 domain maps to 32–49 (GRNALLSDISKGKKLKKT). R33 carries the post-translational modification Asymmetric dimethylarginine. The binds actin stretch occupies residues 45–48 (KLKK). A compositionally biased stretch (gly residues) spans 64–100 (GAGGGYGGGSGGGGGGGSSGGGGNFGGGGPPGLGGLF). 2 positions are modified to omega-N-methylarginine: R121 and R130. Residues 136–147 (PFSSPSGPGRFP) show a composition bias toward low complexity. Phosphoserine is present on S138. 2 stretches are compositionally biased toward pro residues: residues 157-170 (PPEP…PPRP) and 178-190 (SLPP…PRPI). S222 bears the Phosphoserine mark. Composition is skewed to pro residues over residues 234-243 (FPRPPLPPTP), 269-285 (VPPP…PSTP), and 293-309 (APPP…PLPP). S324 carries the post-translational modification Phosphoserine. A compositionally biased stretch (pro residues) spans 328 to 355 (PTPPLPSPGRSGPLPPPPTERPPPPVRD). A Phosphothreonine modification is found at T329. S334 carries the phosphoserine modification. XRSGPXPPXP motif repeat units follow at residues 336-345 (GRSGPLPPPP), 358-367 (GRSGPLPPPP), and 394-403 (PRSGPRPPLP). A compositionally biased stretch (pro residues) spans 397-418 (GPRPPLPPDRPGAGAPPPPPPS). Over residues 419–428 (TSVRNGFQDS) the composition is skewed to polar residues. Basic and acidic residues predominate over residues 464–478 (ARSESRSGSNRRERG).

This sequence belongs to the verprolin family. In terms of assembly, binds to WAS within the N-terminal region, at a site distinct from the CDC42-binding site. Binds profilin and actin. Interacts with DBNL. Binds to WASL. Interacts with DBNL. Interacts with FNBP1L (via the SH3 domain). As to expression, isoforms were differentially expressed. One isoform was ubiquitously expressed, another was muscle-specific and another was expressed in the liver, heart and testis.

The protein localises to the cytoplasmic vesicle. It localises to the cytoplasm. Its subcellular location is the cytoskeleton. It is found in the cell projection. The protein resides in the ruffle. In terms of biological role, plays a role in the reorganization of the actin cytoskeleton. Contributes with NCK1 and GRB2 in the recruitment and activation of WASL. Plays a role in the formation of cell ruffles. May participate in regulating the subcellular localization of WASL, resulting in the disassembly of stress fibers in favor of filopodia formation. In Rattus norvegicus (Rat), this protein is WAS/WASL-interacting protein family member 1 (Wipf1).